The sequence spans 49 residues: Splenin (49 aa).

In terms of domain architecture, LEM-like spans 4–47 (LEDPSVLTKEKLKSELVANNVTLPAGEQRKEVYVELYLQHLTAL). The segment at 32-36 (RKEVY) is essential for biological activity.

Belongs to the thymopoietin family.

Hormone of the spleen with pleiotropic actions on prothymocytes, mature T-cells, the nicotinic acetylcholine receptor, and pituitary corticotrophs. The sequence is that of Splenin (SP) from Bos taurus (Bovine).